The following is a 138-amino-acid chain: Iron sulfur cluster assembly protein 1 (138 aa).

Belongs to the NifU family. In terms of assembly, component of the core Fe-S cluster (ISC) assembly machinery. Requires [2Fe-2S] cluster as cofactor.

The protein localises to the cytoplasm. Its pathway is cofactor biosynthesis; iron-sulfur cluster biosynthesis. Functionally, scaffold protein for the de novo synthesis of iron-sulfur (Fe-S) clusters within mitosomes, which is required for maturation of both [2Fe-2S] and [4Fe-4S] proteins. First, a [2Fe-2S] cluster is transiently assembled on the scaffold protein ISU1. In a second step, the cluster is released from ISU1, transferred to a glutaredoxin, followed by the formation of [2Fe-2S] proteins, the synthesis of [4Fe-4S] clusters and their target-specific insertion into the recipient apoproteins. Cluster assembly on ISU1 depends on the function of the cysteine desulfurase complex NFS1-ISD11, which serves as the sulfur donor for cluster synthesis, the iron-binding protein frataxin as the putative iron donor, and the electron transfer chain comprised of ferredoxin reductase and ferredoxin, which receive their electrons from NADH. The protein is Iron sulfur cluster assembly protein 1 (ISU1) of Trachipleistophora hominis (Microsporidian parasite).